The sequence spans 434 residues: MADNNSPPGSVEQKADQIVEANPLVKDDTSLETIVRRFQDSMSEAKTHKFWETQPVGQFKDIGDTSLPEGPIEPATPLSEVKQEPYNLPSVYEWTTCDMNSDDMCSEVYNLLKNNYVEDDENMFRFNYSKEFLRWALRPPGYYQSWHIGVRAKTSKKLVAFISGVPARIRVRDEVVKMAEINFLCVHKKLRSKRLAPVMIKEVTRRVHLENIWQAAYTAGVILPTPITTCQYWHRSLNPKKLIDVGFSRLGARMTMSRTIKLYKLPDAPITPGFRKMEPRDVPAVTRLLRNYLSQFGVATDFDENDVEHWLLPREDVVDSYLVESPETHDVTDFCSFYTLPSTILGNPNYTTLKAAYSYYNVATQTSFLQLMNDALIVSKQKGFDVFNALDVMHNESFLKELKFGPGDGQLHYYLYNYRLKSALKPAELGLVLL.

A disordered region spans residues 1-24; the sequence is MADNNSPPGSVEQKADQIVEANPL. An N-acetylalanine modification is found at Ala-2. Residues 48-51, 184-186, and 192-196 each bind tetradecanoyl-CoA; these read HKFW, LCV, and SKRLA. The active-site Proton acceptor; via carboxylate is the Leu-434.

It belongs to the NMT family. As to expression, expressed ubiquitously, with higher levels in young tissues (at protein level).

The protein localises to the cytoplasm. The catalysed reaction is N-terminal glycyl-[protein] + tetradecanoyl-CoA = N-tetradecanoylglycyl-[protein] + CoA + H(+). Functionally, adds a myristoyl group to the N-terminal glycine residue of certain cellular proteins. Can also use decanoyl-CoA and lauroyl-CoA as substrates. The sequence is that of Glycylpeptide N-tetradecanoyltransferase 1 (NMT1) from Arabidopsis thaliana (Mouse-ear cress).